Consider the following 215-residue polypeptide: Adenylate kinase (215 aa).

An ATP-binding site is contributed by 10-15; sequence GAGKGT. The NMP stretch occupies residues 30 to 59; the sequence is STGDIFRKNISENTPLGMEARSYMDKGLLV. AMP is bound by residues Thr31, Arg36, 57–59, 85–88, and Gln92; these read LLV and GFPR. The interval 126–163 is LID; the sequence is GRRVCTSCGGSFHIKFNPPTIDGKCNLCGSDIVQRKDD. ATP is bound at residue Arg127. Zn(2+) is bound by residues Cys130 and Cys133. Residue 136–137 coordinates ATP; sequence SF. The Zn(2+) site is built by Cys150 and Cys153. 2 residues coordinate AMP: Arg160 and Arg171. Lys199 contacts ATP.

Belongs to the adenylate kinase family. Monomer.

It is found in the cytoplasm. The enzyme catalyses AMP + ATP = 2 ADP. It participates in purine metabolism; AMP biosynthesis via salvage pathway; AMP from ADP: step 1/1. Functionally, catalyzes the reversible transfer of the terminal phosphate group between ATP and AMP. Plays an important role in cellular energy homeostasis and in adenine nucleotide metabolism. This Clostridium botulinum (strain Alaska E43 / Type E3) protein is Adenylate kinase.